A 240-amino-acid polypeptide reads, in one-letter code: Ribosomal RNA small subunit methyltransferase G (240 aa).

Residues Gly-77, Phe-82, 128 to 129 (AE), and Arg-148 contribute to the S-adenosyl-L-methionine site. Residues 217-240 (EKRSKTPKKYPRKAGTPNKSPLLK) are disordered.

Belongs to the methyltransferase superfamily. RNA methyltransferase RsmG family.

It is found in the cytoplasm. Specifically methylates the N7 position of guanine in position 535 of 16S rRNA. The sequence is that of Ribosomal RNA small subunit methyltransferase G from Staphylococcus carnosus (strain TM300).